The chain runs to 328 residues: MNIYDLIVLGAGTSGIYCASYGAMKGLSSLVIEMTDRIGGQPAHVYPFKKIYDFPTANGILAKDFVDQLYQQQKPYITQGLITYLHNTTIQEQNYLDDQQLFELKLSDNQHVKAKKIILATGNGGFEPIKLKDELIQDQNLDCIHYKINDLTQYQNKDLCFLGGGDSAVELINQLADLKIAKSLSIIHRNHKYRAAQALVDLINKKPINQYLDQTIELIKDNKISFKDNQSGESTQLNFDYLIVQYGLKPLKSLECFDHLEQDLNNNFVINHHHQTSDPNIYAIGLASNFSKRPNLILSGMYEATVAIKHINDTINPYLRATDYLLKE.

Residues serine 14, glutamate 33, glutamine 41, tyrosine 46, isoleucine 90, and phenylalanine 126 each contribute to the FAD site.

This sequence belongs to the ferredoxin--NADP reductase type 2 family. In terms of assembly, homodimer. Requires FAD as cofactor.

It carries out the reaction 2 reduced [2Fe-2S]-[ferredoxin] + NADP(+) + H(+) = 2 oxidized [2Fe-2S]-[ferredoxin] + NADPH. The chain is Ferredoxin--NADP reductase from Mycoplasmoides gallisepticum (strain R(low / passage 15 / clone 2)) (Mycoplasma gallisepticum).